The primary structure comprises 158 residues: U4/U6.U5 small nuclear ribonucleoprotein 27 kDa protein (158 aa).

Basic residues predominate over residues 1–30 (MGRSRSRTPPRRERRRSRSSSRDRERRRRE). The disordered stretch occupies residues 1 to 100 (MGRSRSRTPP…ISAEDMQGKT (100 aa)). The span at 31-41 (RERSRSRDRDR) shows a compositional bias: basic and acidic residues. The segment covering 42–62 (RRSRSRSPHRRRSRSPRRHRS) has biased composition (basic residues). The span at 69-86 (RQKDRRDDDRKDVKEKPA) shows a compositional bias: basic and acidic residues.

This sequence belongs to the SNUT3 family. Part of a tri-snRNP complex.

The protein resides in the nucleus. May play a role in mRNA splicing. The sequence is that of U4/U6.U5 small nuclear ribonucleoprotein 27 kDa protein (snrnp27) from Danio rerio (Zebrafish).